The following is a 3587-amino-acid chain: Surfactin synthase subunit 1 (3587 aa).

3 consecutive Carrier domains span residues 971–1046, 2010–2085, and 3038–3112; these read APRN…DHRE, APRN…ASAE, and APTT…ERAE. O-(pantetheine 4'-phosphoryl)serine is present on residues serine 1006, serine 2045, and serine 3073.

Belongs to the ATP-dependent AMP-binding enzyme family. Pantetheine 4'-phosphate is required as a cofactor.

It participates in antibiotic biosynthesis; surfactin biosynthesis. In terms of biological role, this protein is a multifunctional enzyme able to activate and polymerize the amino acids Leu, Glu, Asp and Val. Activation sites for these AA consist of individual domains. The sequence is that of Surfactin synthase subunit 1 (srfAA) from Bacillus subtilis (strain 168).